We begin with the raw amino-acid sequence, 201 residues long: Glycerol-3-phosphate acyltransferase (201 aa).

5 consecutive transmembrane segments (helical) span residues 10–30, 60–80, 86–106, 116–136, and 166–186; these read MLIG…GLIL, LAAA…LIAA, AAIA…WIGF, LGVL…AWIV, and ALAA…RANI.

This sequence belongs to the PlsY family. Probably interacts with PlsX.

It localises to the cell inner membrane. It catalyses the reaction an acyl phosphate + sn-glycerol 3-phosphate = a 1-acyl-sn-glycero-3-phosphate + phosphate. It functions in the pathway lipid metabolism; phospholipid metabolism. Its function is as follows. Catalyzes the transfer of an acyl group from acyl-phosphate (acyl-PO(4)) to glycerol-3-phosphate (G3P) to form lysophosphatidic acid (LPA). This enzyme utilizes acyl-phosphate as fatty acyl donor, but not acyl-CoA or acyl-ACP. The chain is Glycerol-3-phosphate acyltransferase from Brucella abortus (strain 2308).